A 195-amino-acid chain; its full sequence is UMP-CMP kinase (195 aa).

ATP is bound at residue 17-22 (GSGKGT). The interval 37–66 (SAGDLLRQEQQSGSKDGEMIATMIKNGEIV) is NMP. Residues arginine 43, 64 to 66 (EIV), and 91 to 94 (GFPR) each bind a ribonucleoside 5'-phosphate. Asparagine 98 is a binding site for CMP. The LID stretch occupies residues 131-141 (KRGESSGRSDD). Residue arginine 132 participates in ATP binding. A ribonucleoside 5'-phosphate is bound by residues arginine 138 and arginine 149. ATP is bound at residue arginine 177.

The protein belongs to the adenylate kinase family. UMP-CMP kinase subfamily. Monomer. Mg(2+) is required as a cofactor.

The protein resides in the cytoplasm. It localises to the nucleus. The enzyme catalyses CMP + ATP = CDP + ADP. It catalyses the reaction dCMP + ATP = dCDP + ADP. It carries out the reaction UMP + ATP = UDP + ADP. In terms of biological role, catalyzes the phosphorylation of pyrimidine nucleoside monophosphates at the expense of ATP. Plays an important role in de novo pyrimidine nucleotide biosynthesis. Has preference for UMP and CMP as phosphate acceptors. This chain is UMP-CMP kinase, found in Dictyostelium discoideum (Social amoeba).